The primary structure comprises 535 residues: MAKVQKLPLPWSECICPICQEILLEPVTLPCKHTLCNPCFQMTVEKASLCCPFCRKRVSTWARQHSRTRTLVNKELWEVIQKQYPKQCQRRASGQESDDLSDELTSCPVPVLCKPGEIRQEYEAEVSKIEAERTAQEEAERKASEDYIQKLLAEEEAEENLHAEASQREIEEQLKRDEELARLLSGDMDLSNASCTSVSPVTSKKVVSKSSKIVKSKQRVSGDIERFLSPKPRRALAAFGINESRNSDTSGSCILLDEDEDEIPDLSPQCPSTSLIQERDVELPMPYLPNCYKLESDAASQQDSCSERNDICNGTYSCSDSIDVEVSKTMEQQRATADSQEYRMETNAMSYSTPKRKCEECYLDIEEKAGSCQSVKKKKLSLSEDSPVLSVHAGKFIELEENLYERRKQEEHDRLFALQLQRELDKELKQVNRGKGSPDEYQLRPKRGLKLQECNDSPLPHNEQTPVQDKGGNTQSGYSPDENKKPSRKKSITSSQVRQSRAVTNTERSSEGMNVLKPSNKQPTILDLFQRSAGK.

The RING-type zinc-finger motif lies at 16–55 (CPICQEILLEPVTLPCKHTLCNPCFQMTVEKASLCCPFCR). Residues 112-130 (LCKPGEIRQEYEAEVSKIE) carry the LR motif 1 motif. The UMI motif signature appears at 145 to 153 (EDYIQKLLA). Short sequence motifs (MIU motif) lie at residues 170 to 193 (IEEQ…LSNA) and 406 to 429 (RRKQ…KELK). Residues 429–443 (KQVNRGKGSPDEYQL) show a composition bias toward basic and acidic residues. Residues 429 to 535 (KQVNRGKGSP…LDLFQRSAGK (107 aa)) are disordered. The short motif at 433 to 444 (RGKGSPDEYQLR) is the LR motif 2 element. 2 stretches are compositionally biased toward polar residues: residues 462–478 (NEQT…QSGY) and 492–507 (ITSS…TNTE).

Belongs to the RNF168 family. As to quaternary structure, monomer.

Its subcellular location is the nucleus. It carries out the reaction S-ubiquitinyl-[E2 ubiquitin-conjugating enzyme]-L-cysteine + [acceptor protein]-L-lysine = [E2 ubiquitin-conjugating enzyme]-L-cysteine + N(6)-ubiquitinyl-[acceptor protein]-L-lysine.. Its pathway is protein modification; protein ubiquitination. Its function is as follows. E3 ubiquitin-protein ligase required for accumulation of repair proteins to sites of DNA damage. Acts with ube2n/ubc13 to amplify the rnf8-dependent histone ubiquitination. Recruited to sites of DNA damage at double-strand breaks (DSBs) by binding to ubiquitinated histone H2A and ubiquitinates histone H2A and H2AX, leading to amplify the rnf8-dependent H2A ubiquitination and promoting the formation of 'Lys-63'-linked ubiquitin conjugates. This leads to concentrate ubiquitinated histones H2A and H2AX at DNA lesions to the threshold required for recruitment of tp53bp1 and brca1. Catalyzes monoubiquitination of 'Lys-13' and 'Lys-15' of nucleosomal histone H2A (H2AK13Ub and H2AK15Ub, respectively). The sequence is that of E3 ubiquitin-protein ligase rnf168 from Xenopus tropicalis (Western clawed frog).